A 452-amino-acid polypeptide reads, in one-letter code: UPF0210 protein Hore_14430 (452 aa).

The protein belongs to the UPF0210 family. Homodimer.

This Halothermothrix orenii (strain H 168 / OCM 544 / DSM 9562) protein is UPF0210 protein Hore_14430.